The primary structure comprises 397 residues: Penicillopepsin-1 (397 aa).

The first 20 residues, 1 to 20 (MVVFSQVTVALTCFSAIASA), serve as a signal peptide directing secretion. A propeptide spans 21–71 (AAVRQEPPQGFTVNQVQKAVPGTRTVNLPGLYANALVKYGATVPATVHAAA) (activation peptide). Residues 87-394 (YLTPVTIGSS…DSEGPRLGFA (308 aa)) enclose the Peptidase A1 domain. Residues Asp103 and Asp285 contribute to the active site. Asn311 carries an N-linked (GlcNAc...) asparagine glycan. A disulfide bond links Cys322 and Cys357.

Belongs to the peptidase A1 family. As to quaternary structure, monomer.

The protein localises to the secreted. The catalysed reaction is Hydrolysis of proteins with broad specificity similar to that of pepsin A, preferring hydrophobic residues at P1 and P1', but also cleaving 20-Gly-|-Glu-21 in the B chain of insulin. Clots milk, and activates trypsinogen.. Functionally, secreted aspartic endopeptidase that allows assimilation of proteinaceous substrates. The scissile peptide bond is attacked by a nucleophilic water molecule activated by two aspartic residues in the active site. Shows a broad primary substrate specificity. Favors hydrophobic residues at the P1 and P1' positions, but can also activate trypsinogen and hydrolyze the B chain of insulin between positions 'Gly-20' and 'Glu-21'. The sequence is that of Penicillopepsin-1 from Penicillium roqueforti.